Consider the following 270-residue polypeptide: Glutamate racemase (270 aa).

Substrate is bound by residues 15–16 (DS) and 47–48 (YG). The active-site Proton donor/acceptor is the cysteine 78. 79-80 (NT) is a binding site for substrate. Cysteine 189 acts as the Proton donor/acceptor in catalysis. Residue 190–191 (TH) coordinates substrate.

This sequence belongs to the aspartate/glutamate racemases family.

The catalysed reaction is L-glutamate = D-glutamate. It functions in the pathway cell wall biogenesis; peptidoglycan biosynthesis. Functionally, provides the (R)-glutamate required for cell wall biosynthesis. The polypeptide is Glutamate racemase (Syntrophus aciditrophicus (strain SB)).